Here is a 236-residue protein sequence, read N- to C-terminus: Small ribosomal subunit protein uS2c (236 aa).

It belongs to the universal ribosomal protein uS2 family.

The protein localises to the plastid. The protein resides in the chloroplast. The protein is Small ribosomal subunit protein uS2c (rps2) of Oryza sativa (Rice).